The following is a 489-amino-acid chain: Glutamyl-tRNA(Gln) amidotransferase subunit A (489 aa).

Residues K77 and S152 each act as charge relay system in the active site. Catalysis depends on S176, which acts as the Acyl-ester intermediate.

This sequence belongs to the amidase family. GatA subfamily. In terms of assembly, heterotrimer of A, B and C subunits.

It carries out the reaction L-glutamyl-tRNA(Gln) + L-glutamine + ATP + H2O = L-glutaminyl-tRNA(Gln) + L-glutamate + ADP + phosphate + H(+). Its function is as follows. Allows the formation of correctly charged Gln-tRNA(Gln) through the transamidation of misacylated Glu-tRNA(Gln) in organisms which lack glutaminyl-tRNA synthetase. The reaction takes place in the presence of glutamine and ATP through an activated gamma-phospho-Glu-tRNA(Gln). This chain is Glutamyl-tRNA(Gln) amidotransferase subunit A, found in Levilactobacillus brevis (strain ATCC 367 / BCRC 12310 / CIP 105137 / JCM 1170 / LMG 11437 / NCIMB 947 / NCTC 947) (Lactobacillus brevis).